We begin with the raw amino-acid sequence, 474 residues long: Rhodanese-like domain-containing protein 7 (474 aa).

Disordered regions lie at residues 20-68 (SSPP…SSLK) and 179-198 (VSPE…PLAA). Residues 53–68 (QSQPHKLSSSPSSSLK) are compositionally biased toward low complexity. Residues 245–368 (SDPETVVIDV…YLEEVPKTES (124 aa)) enclose the Rhodanese domain. Catalysis depends on Cys-328, which acts as the Cysteine persulfide intermediate. The disordered stretch occupies residues 432–474 (RARARQTQFEEWGVIGGPDKGRRPATKPDSPRKKINAKLGSSI).

In Arabidopsis thaliana (Mouse-ear cress), this protein is Rhodanese-like domain-containing protein 7 (STR7).